Consider the following 376-residue polypeptide: Succinate--CoA ligase [ADP-forming] subunit beta (376 aa).

The ATP-grasp domain maps to 9 to 234 (KAIAKKYGIP…ERELSELEKE (226 aa)). ATP-binding positions include K45, 52–54 (GRG), E91, E94, and E99. Mg(2+)-binding residues include N191 and D204. Residues N254 and 311–313 (GIT) contribute to the substrate site.

It belongs to the succinate/malate CoA ligase beta subunit family. Heterotetramer of two alpha and two beta subunits. It depends on Mg(2+) as a cofactor.

The catalysed reaction is succinate + ATP + CoA = succinyl-CoA + ADP + phosphate. The enzyme catalyses GTP + succinate + CoA = succinyl-CoA + GDP + phosphate. Its pathway is carbohydrate metabolism; tricarboxylic acid cycle; succinate from succinyl-CoA (ligase route): step 1/1. Its function is as follows. Succinyl-CoA synthetase functions in the citric acid cycle (TCA), coupling the hydrolysis of succinyl-CoA to the synthesis of either ATP or GTP and thus represents the only step of substrate-level phosphorylation in the TCA. The beta subunit provides nucleotide specificity of the enzyme and binds the substrate succinate, while the binding sites for coenzyme A and phosphate are found in the alpha subunit. The polypeptide is Succinate--CoA ligase [ADP-forming] subunit beta (Ignicoccus hospitalis (strain KIN4/I / DSM 18386 / JCM 14125)).